Consider the following 289-residue polypeptide: E3 ubiquitin-protein ligase MARCHF1 (289 aa).

Residues 1-66 (MLGWCEAIAR…SPTTGTAPRS (66 aa)) are responsible for low stability. Residues 13-69 (HRIPNNTRTPEISGDLADASQTSTLNEKSPGRSASRSSNISKASSPTTGTAPRSQSR) are disordered. A compositionally biased stretch (low complexity) spans 43–58 (GRSASRSSNISKASSP). Residues 59-69 (TTGTAPRSQSR) show a composition bias toward polar residues. The segment at 72–133 (VCPSTQDICR…ELCKYDFIME (62 aa)) adopts an RING-CH-type zinc-finger fold. Residues C80, C83, C97, C99, H107, C110, C123, and C126 each coordinate Zn(2+). Helical transmembrane passes span 155–175 (IFCS…SLYV) and 197–217 (FWTK…FMYV). A responsible for down-regulation of CD86 and MHC class II cell surface expression region spans residues 222 to 279 (YVQLWRRLKAYNRVIFVQNCPDTAKKLEKNFSCNVNTDIKDAVVVPVPQTGANSLPSA).

As to quaternary structure, interacts with CD83; this interaction antagonizes MARCHF1-mediated MHC II and CD86 down-regulation. Ubiquitinated via ubiquitin-conjugating enzyme E2 D1/UBE2D1 independently of lysines, leading to proteolytic degradation. In terms of processing, has a short half-life. Instability/short half-life permits rapid changes that allow efficient induction of antigen presentation once antigen presenting cells, APCs, receive maturation signals. Small changes in protein levels significantly alter the cell surface display of MHC class II proteins. In terms of tissue distribution, expressed in antigen presenting cells, APCs, located in lymph nodes and spleen. Also expressed in lung. Expression is high in follicular B-cells, moderate in dendritic cells and low in splenic T-cells.

The protein localises to the golgi apparatus. It is found in the trans-Golgi network membrane. It localises to the lysosome membrane. The protein resides in the cytoplasmic vesicle membrane. Its subcellular location is the late endosome membrane. The protein localises to the early endosome membrane. It is found in the cell membrane. It catalyses the reaction S-ubiquitinyl-[E2 ubiquitin-conjugating enzyme]-L-cysteine + [acceptor protein]-L-lysine = [E2 ubiquitin-conjugating enzyme]-L-cysteine + N(6)-ubiquitinyl-[acceptor protein]-L-lysine.. Its pathway is protein modification; protein ubiquitination. E3 ubiquitin-protein ligase that mediates ubiquitination of TFRC, CD86, FAS and MHC class II proteins, such as HLA-DR alpha and beta, and promotes their subsequent endocytosis and sorting to lysosomes via multivesicular bodies. By constitutively ubiquitinating MHC class II proteins in immature dendritic cells, down-regulates their cell surface localization thus sequestering them in the intracellular endosomal system. Also regulates insulin sensitivity by controlling surface expression of the insulin receptor subunit beta/INSR by direct ubiquitination and degradation. Functionally, (Microbial infection) Plays a role in iron metabolism by regulating the levels of the transferrin receptor TFRC during human cytomegalovirus infection, subsequently contributing to a proviral effect. The polypeptide is E3 ubiquitin-protein ligase MARCHF1 (Homo sapiens (Human)).